Consider the following 201-residue polypeptide: LexA repressor 1 (201 aa).

The H-T-H motif DNA-binding region spans Leu27–Gln47. Active-site for autocatalytic cleavage activity residues include Ser122 and Lys159.

This sequence belongs to the peptidase S24 family. Homodimer.

It catalyses the reaction Hydrolysis of Ala-|-Gly bond in repressor LexA.. Represses a number of genes involved in the response to DNA damage (SOS response), including recA and lexA. In the presence of single-stranded DNA, RecA interacts with LexA causing an autocatalytic cleavage which disrupts the DNA-binding part of LexA, leading to derepression of the SOS regulon and eventually DNA repair. In Xanthomonas campestris pv. campestris (strain ATCC 33913 / DSM 3586 / NCPPB 528 / LMG 568 / P 25), this protein is LexA repressor 1.